An 87-amino-acid chain; its full sequence is Small polypeptide ROTUNDIFOLIA LIKE 2 (87 aa).

Residues 19–35 traverse the membrane as a helical segment; it reads LIPHTSHYILQLVYLHL. A required for DVL/RTFL small polypeptide activity region spans residues 56–87; the sequence is GQMGRLNRAFREKRARFYIFRRCVIMLLRWSD.

Belongs to the DVL/RTFL small polypeptides family.

Its subcellular location is the cell membrane. In terms of biological role, small polypeptide acting as a regulatory molecule which coordinates cellular responses required for differentiation, growth and development, probably by restricting polar cell proliferation in lateral organs. The protein is Small polypeptide ROTUNDIFOLIA LIKE 2 of Oryza sativa subsp. japonica (Rice).